The chain runs to 383 residues: Chitinase-3-like protein 1 (383 aa).

The N-terminal stretch at 1–21 (MGVKASQTGFVVLVLLQCCSA) is a signal peptide. The GH18 domain maps to 22-383 (YKLVCYYTSW…NAIKDALAAT (362 aa)). Cysteines 26 and 51 form a disulfide. N-linked (GlcNAc...) asparagine glycosylation is present at N60. Residues 70-71 (EW), 97-100 (GGWN), Y141, 204-207 (MTYD), and R263 each bind chitin. An intrachain disulfide couples C300 to C364. The interval 324–338 (QWVGYDDQESVKSKV) is important for AKT1 activation and IL8 production. Residue W352 coordinates chitin.

The protein belongs to the glycosyl hydrolase 18 family. Monomer. Post-translationally, glycosylated. Present in activated macrophages, articular chondrocytes, synovial cells as well as in liver. Very low or undetectable expression in non-inflammatory colon. Undetectable in muscle tissues, lung, pancreas, mononuclear cells, or fibroblasts.

It localises to the secreted. The protein resides in the extracellular space. Its subcellular location is the cytoplasm. It is found in the perinuclear region. The protein localises to the endoplasmic reticulum. In terms of biological role, carbohydrate-binding lectin with a preference for chitin. Has no chitinase activity. May play a role in tissue remodeling and in the capacity of cells to respond to and cope with changes in their environment. Plays a role in T-helper cell type 2 (Th2) inflammatory response and IL-13-induced inflammation, regulating allergen sensitization, inflammatory cell apoptosis, dendritic cell accumulation and M2 macrophage differentiation. Facilitates invasion of pathogenic enteric bacteria into colonic mucosa and lymphoid organs. Mediates activation of AKT1 signaling pathway and subsequent IL8 production in colonic epithelial cells. Regulates antibacterial responses in lung by contributing to macrophage bacterial killing, controlling bacterial dissemination and augmenting host tolerance. Also regulates hyperoxia-induced injury, inflammation and epithelial apoptosis in lung. The polypeptide is Chitinase-3-like protein 1 (CHI3L1) (Homo sapiens (Human)).